The following is a 414-amino-acid chain: Cytochrome b (414 aa).

2 helical membrane passes run 40–60 (FFGSLAILTLVIQIVTGVWLA) and 84–104 (GWLIRYMHSTGASMFFIVIYL). Residues His91 and His105 each coordinate heme b. Transmembrane regions (helical) follow at residues 121-141 (LLWMIGVVIYLVMMATAFFGY), 154-174 (QVIVNLFAAVPVVGEDLSVWV), 188-208 (FFAFHFLLPFLLAGLVFLHIV), 252-272 (LMGVVVFLAIFGYVMFFNPTM), 294-314 (IAPVWYFTPFYAMLRAVPPMY), 317-337 (QFPGVVVMFAAILILFVLPWL), 351-371 (IFKWATGIFVVSFVALAWLGI), and 378-398 (YTLLSQIFTVLYFAYFLLMPI). 2 residues coordinate heme b: His192 and His206.

It belongs to the cytochrome b family. As to quaternary structure, the main subunits of complex b-c1 are: cytochrome b, cytochrome c1 and the Rieske protein. Heme b is required as a cofactor.

Its subcellular location is the cell membrane. Its function is as follows. Component of the ubiquinol-cytochrome c reductase complex (complex III or cytochrome b-c1 complex), which is a respiratory chain that generates an electrochemical potential coupled to ATP synthesis. The chain is Cytochrome b (petB) from Allochromatium vinosum (strain ATCC 17899 / DSM 180 / NBRC 103801 / NCIMB 10441 / D) (Chromatium vinosum).